The chain runs to 364 residues: Flavonoid 3'-O-methyltransferase 3 (364 aa).

Aspartate 232 contacts S-adenosyl-L-methionine. The Proton acceptor role is filled by histidine 270.

It belongs to the class I-like SAM-binding methyltransferase superfamily. Cation-independent O-methyltransferase family. As to quaternary structure, homodimer.

It catalyses the reaction quercetin + S-adenosyl-L-methionine = isorhamnetin + S-adenosyl-L-homocysteine + H(+). The enzyme catalyses luteolin + S-adenosyl-L-methionine = chrysoeriol + S-adenosyl-L-homocysteine + H(+). It carries out the reaction a 3'-hydroxyflavone + S-adenosyl-L-methionine = a 3'-methoxyflavone + S-adenosyl-L-homocysteine + H(+). The catalysed reaction is rhamnetin + S-adenosyl-L-methionine = rhamnacene + S-adenosyl-L-homocysteine + H(+). It catalyses the reaction 3',4',7,8-tetrahydroxyflavone + S-adenosyl-L-methionine = 4',7,8-trihydroxy-3'-methoxyflavone-7-olate + S-adenosyl-L-homocysteine + H(+). The enzyme catalyses taxifolin + S-adenosyl-L-methionine = taxifolin 3'-methyl ether + S-adenosyl-L-homocysteine + H(+). It functions in the pathway flavonoid metabolism. Flavonoid 3'-O-methyltransferase involved in the biosynthesis of polymethoxylated flavonoids natural products such as pebrellin, aroma compounds which contribute to the flavor of peppermint, and exhibit pharmacological activities such as anti-allergic, anti-oxidant, antibacterial, anti-proliferative, and anti-inflammatory effects. Catalyzes S-adenosylmethionine-dependent regioselective 3'-O-methylation of flavonoids; active on various hydroxylated flavonoid substrates, including quercetin, rhamnetin, luteolin (LUT), 7,8,3'4'-tetrahydroxy-flavone and taxifolin, and, with a lower efficiency, eupatorin and hesperetin. In Mentha piperita (Peppermint), this protein is Flavonoid 3'-O-methyltransferase 3.